Reading from the N-terminus, the 192-residue chain is Ion-translocating oxidoreductase complex subunit B (192 aa).

Residues 1–26 are hydrophobic; that stretch reads MNAIWIAVAAVSLLGLAFGAILGYAS. The 60-residue stretch at 32–91 folds into the 4Fe-4S domain; that stretch reads EDDPVVEKIDEILPQSQCGQCGYPGCRPYAEAISCNGEKINRCAPGGEAVMLKIAELLNV. [4Fe-4S] cluster-binding residues include Cys49, Cys52, Cys57, Cys74, Cys117, Cys120, Cys123, Cys127, Cys147, Cys150, Cys153, and Cys157. 4Fe-4S ferredoxin-type domains are found at residues 108 to 137 and 138 to 167; these read MVAV…GATR and AMHT…LQPV.

Belongs to the 4Fe4S bacterial-type ferredoxin family. RnfB subfamily. In terms of assembly, the complex is composed of six subunits: RsxA, RsxB, RsxC, RsxD, RsxE and RsxG. The cofactor is [4Fe-4S] cluster.

It localises to the cell inner membrane. Functionally, part of a membrane-bound complex that couples electron transfer with translocation of ions across the membrane. Required to maintain the reduced state of SoxR. This chain is Ion-translocating oxidoreductase complex subunit B, found in Escherichia coli O139:H28 (strain E24377A / ETEC).